Reading from the N-terminus, the 137-residue chain is NADH dehydrogenase [ubiquinone] 1 beta subcomplex subunit 7 (137 aa).

The N-myristoyl glycine moiety is linked to residue G2. The CHCH domain occupies 56 to 98; the sequence is RDYCAHYLIRFLKCKRDSFPNFLACKHERHDWDYCEHLDYVKR. Residues 59 to 69 carry the Cx9C motif 1 motif; that stretch reads CAHYLIRFLKC. Intrachain disulfides connect C59–C90 and C69–C80. Position 73 is a phosphoserine (S73). Positions 80–90 match the Cx9C motif 2 motif; sequence CKHERHDWDYC. The disordered stretch occupies residues 110-137; it reads QRKKRREQREADMAKGLGPGEVAPEVAL.

This sequence belongs to the complex I NDUFB7 subunit family. Complex I is composed of 45 different subunits.

The protein localises to the mitochondrion inner membrane. Its subcellular location is the mitochondrion intermembrane space. Accessory subunit of the mitochondrial membrane respiratory chain NADH dehydrogenase (Complex I), that is believed not to be involved in catalysis. Complex I functions in the transfer of electrons from NADH to the respiratory chain. The immediate electron acceptor for the enzyme is believed to be ubiquinone. The sequence is that of NADH dehydrogenase [ubiquinone] 1 beta subcomplex subunit 7 (NDUFB7) from Bos taurus (Bovine).